The primary structure comprises 385 residues: 8-amino-7-oxononanoate synthase (385 aa).

Residue arginine 21 participates in substrate binding. 108–109 (GF) serves as a coordination point for pyridoxal 5'-phosphate. Histidine 133 contacts substrate. Serine 179, histidine 207, and threonine 233 together coordinate pyridoxal 5'-phosphate. Lysine 236 carries the N6-(pyridoxal phosphate)lysine modification. Threonine 352 is a binding site for substrate.

The protein belongs to the class-II pyridoxal-phosphate-dependent aminotransferase family. BioF subfamily. As to quaternary structure, homodimer. It depends on pyridoxal 5'-phosphate as a cofactor.

It catalyses the reaction 6-carboxyhexanoyl-[ACP] + L-alanine + H(+) = (8S)-8-amino-7-oxononanoate + holo-[ACP] + CO2. Its pathway is cofactor biosynthesis; biotin biosynthesis. Functionally, catalyzes the decarboxylative condensation of pimeloyl-[acyl-carrier protein] and L-alanine to produce 8-amino-7-oxononanoate (AON), [acyl-carrier protein], and carbon dioxide. The sequence is that of 8-amino-7-oxononanoate synthase from Salmonella schwarzengrund (strain CVM19633).